The following is a 318-amino-acid chain: L-lactate dehydrogenase (318 aa).

NAD(+) is bound by residues Val18, Asp39, Lys44, Tyr69, and Gly83–Ala84. The substrate site is built by Gln86 and Arg92. Residues Ser105, Val122–Asn124, and Ser147 contribute to the NAD(+) site. Asn124–Asp127 is a binding site for substrate. Residue Asp152–Arg155 participates in substrate binding. The Proton acceptor role is filled by His179. Residue Tyr225 is modified to Phosphotyrosine. Position 234 (Thr234) interacts with substrate.

The protein belongs to the LDH/MDH superfamily. LDH family. As to quaternary structure, homotetramer.

It is found in the cytoplasm. It catalyses the reaction (S)-lactate + NAD(+) = pyruvate + NADH + H(+). It participates in fermentation; pyruvate fermentation to lactate; (S)-lactate from pyruvate: step 1/1. Its function is as follows. Catalyzes the conversion of lactate to pyruvate. In Clostridium botulinum (strain Kyoto / Type A2), this protein is L-lactate dehydrogenase.